The chain runs to 452 residues: Ribosomal L1 domain-containing protein 1 (452 aa).

Residue Met-1 is modified to N-acetylmethionine. Glycyl lysine isopeptide (Lys-Gly) (interchain with G-Cter in SUMO2) cross-links involve residues Lys-119 and Lys-253. A coiled-coil region spans residues 277–350; the sequence is LRSLRKQELK…QKVTEECEEA (74 aa). Residues 283 to 452 are disordered; the sequence is QELKKRKREN…DKKTKAAHSN (170 aa). Residues 292-301 are compositionally biased toward basic and acidic residues; sequence NAKLKKESKM. Polar residues predominate over residues 309 to 319; sequence ATSLLTQSGLA. Over residues 330–341 the composition is skewed to basic residues; it reads QKKKTNKAHKKQ. 5 positions are modified to phosphothreonine: Thr-334, Thr-344, Thr-360, Thr-399, and Thr-407. Basic and acidic residues predominate over residues 414–423; sequence KDVQEFRKPE. Residues 425 to 440 are compositionally biased toward polar residues; it reads SSFSTPRKSGKKASNT. Thr-429 carries the phosphothreonine modification. The residue at position 432 (Lys-432) is an N6-acetyllysine. The residue at position 433 (Ser-433) is a Phosphoserine.

This sequence belongs to the universal ribosomal protein uL1 family. Highly divergent. In terms of assembly, interacts with ING1. Interacts with KPNA7 and KPNA2.

It is found in the nucleus. The protein localises to the nucleolus. Its function is as follows. Regulates cellular senescence through inhibition of PTEN translation. Acts as a pro-apoptotic regulator in response to DNA damage. This Mus musculus (Mouse) protein is Ribosomal L1 domain-containing protein 1.